Reading from the N-terminus, the 177-residue chain is Large ribosomal subunit protein uL6 (177 aa).

Belongs to the universal ribosomal protein uL6 family. Part of the 50S ribosomal subunit.

Functionally, this protein binds to the 23S rRNA, and is important in its secondary structure. It is located near the subunit interface in the base of the L7/L12 stalk, and near the tRNA binding site of the peptidyltransferase center. The sequence is that of Large ribosomal subunit protein uL6 from Vibrio cholerae serotype O1 (strain ATCC 39315 / El Tor Inaba N16961).